We begin with the raw amino-acid sequence, 238 residues long: MNEQQFIEALKKKGIELSEKQITQFKKYFELLVEWNEKMNLTAITDLEGVYLKHFFDSISASFYFDFSKVITVCDVGAGAGFPSIPIKICFPHLHVTIVDSLNKRITFLNHLSDELQLENMNFVHARAEEFGQNIKYREQYDVVTARAVARLSVLSELCVPLAKQGGYFVALKAAAGAEELKDAKKALTTLGVKLKEEYSFKLPVEESDRILYIFDKIKGTPKKYPRKPGVPNKTPIQ.

S-adenosyl-L-methionine is bound by residues glycine 77, phenylalanine 82, 128–129 (AE), and arginine 147.

The protein belongs to the methyltransferase superfamily. RNA methyltransferase RsmG family.

It localises to the cytoplasm. Its function is as follows. Specifically methylates the N7 position of guanine in position 535 of 16S rRNA. The polypeptide is Ribosomal RNA small subunit methyltransferase G (Lysinibacillus sphaericus (strain C3-41)).